A 940-amino-acid chain; its full sequence is Protein translocase subunit SecA (940 aa).

ATP-binding positions include Gln87, 105–109, and Asp494; that span reads GEGKT. Positions 879–940 are disordered; that stretch reads AQQQKKAVEG…KCHGASEASV (62 aa). A compositionally biased stretch (basic and acidic residues) spans 884-898; it reads KAVEGRATADGKLDE. Over residues 900–915 the composition is skewed to low complexity; sequence SVAAAARPAAASRPAV. Cys921, Cys923, Cys932, and His933 together coordinate Zn(2+).

It belongs to the SecA family. Monomer and homodimer. Part of the essential Sec protein translocation apparatus which comprises SecA, SecYEG and auxiliary proteins SecDF-YajC and YidC. Zn(2+) serves as cofactor.

It is found in the cell inner membrane. The protein resides in the cytoplasm. The catalysed reaction is ATP + H2O + cellular proteinSide 1 = ADP + phosphate + cellular proteinSide 2.. Its function is as follows. Part of the Sec protein translocase complex. Interacts with the SecYEG preprotein conducting channel. Has a central role in coupling the hydrolysis of ATP to the transfer of proteins into and across the cell membrane, serving as an ATP-driven molecular motor driving the stepwise translocation of polypeptide chains across the membrane. The chain is Protein translocase subunit SecA from Myxococcus xanthus (strain DK1622).